The chain runs to 307 residues: Cyclin-dependent kinase 5 activator 1 (307 aa).

Glycine 2 carries N-myristoyl glycine lipidation. Serine 8 is modified (phosphoserine; by CDK5). Residues 97 to 135 (TFAQPPPAQPPAPPASQLSGSQTGVSSSVKKAPHPAVSS) are disordered. The segment covering 100-110 (QPPPAQPPAPP) has biased composition (pro residues). Positions 112–125 (SQLSGSQTGVSSSV) are enriched in polar residues. Threonine 138 carries the phosphothreonine; by CDK5 modification.

This sequence belongs to the cyclin-dependent kinase 5 activator family. As to quaternary structure, heterodimer composed of a catalytic subunit CDK5 and a regulatory subunit CDK5R1 (p25) and macromolecular complex composed of at least CDK5, CDK5R1 (p35) and CDK5RAP1 or CDK5RAP2 or CDK5RAP3. Only the heterodimer shows kinase activity. Interacts with EPHA4 and NGEF; may mediate the activation of NGEF by EPHA4. Interacts with RASGRF2. The complex p35/CDK5 interacts with CLOCK. In terms of processing, the p35 form is proteolytically cleaved by calpain, giving rise to the p25 form. P35 has a 5 to 10 fold shorter half-life compared to p25. The conversion results in deregulation of the CDK5 kinase: p25/CDK5 kinase displays an increased and altered tau phosphorylation in comparison to the p35/CDK5 kinase in vivo. Myristoylated. A proper myristoylation signal is essential for the proper distribution of p35. Post-translationally, phosphorylation at Ser-8 and Thr-138 by CDK5 prevents calpain-mediated proteolysis. In terms of processing, ubiquitinated, leading to its degradation: degradation of p35 by proteasome results in down-regulation of CDK5 activity. During this process, CDK5 phosphorylates p35 and induces its ubiquitination and subsequent degradation. Ubiquitinated by the CRL2(FEM1B) complex, which recognizes the -Gly-Leu-Asp-Arg C-degron at the C-terminus, leading to its degradation. As to expression, brain and neuron specific.

The protein resides in the cell membrane. It localises to the cell projection. Its subcellular location is the neuron projection. It is found in the nucleus. The protein localises to the cytoplasm. The protein resides in the perinuclear region. It localises to the perikaryon. Its function is as follows. p35 is a neuron specific activator of CDK5. The complex p35/CDK5 is required for neurite outgrowth and cortical lamination. Involved in dendritic spine morphogenesis by mediating the EFNA1-EPHA4 signaling. Activator of TPKII. The complex p35/CDK5 participates in the regulation of the circadian clock by modulating the function of CLOCK protein: phosphorylates CLOCK at 'Thr-451' and 'Thr-461' and regulates the transcriptional activity of the CLOCK-BMAL1 heterodimer in association with altered stability and subcellular distribution. This Bos taurus (Bovine) protein is Cyclin-dependent kinase 5 activator 1 (CDK5R1).